A 118-amino-acid polypeptide reads, in one-letter code: Endoribonuclease MazF9 (118 aa).

Belongs to the PemK/MazF family. In terms of assembly, forms a complex with cognate antitoxin MazE9.

Functionally, toxic component of a type II toxin-antitoxin (TA) system. Upon expression in E.coli and M.smegmatis inhibits cell growth and colony formation. Its toxic effect is neutralized by coexpression with cognate antitoxin MazE9. Acts as an mRNA interferase, specifically cleaving between U and C in UAC sequences. May cleave its cognate antitoxin's gene. In E.coli expression with non-cognate antitoxins VapB27 and VapB40 partially neutralizes the toxin. In Mycobacterium tuberculosis (strain ATCC 25618 / H37Rv), this protein is Endoribonuclease MazF9 (mazF9).